Reading from the N-terminus, the 294-residue chain is MEQYEKEEKIGEGTYGVVYRARDKVTNETIALKKIRLEQEDEGVPSTAIREISLLKEMHHGNIVRLHDVIHSEKRIYLVFEYLDLDLKKFMDSCPEFAKNPTLIKSYLYQILRGVAYCHSHRVLHRDLKPQNLLIDRRTNALKLADFGLARAFGIPVRTFTHEVVTLWYRAPEILLGSRQYSTPVDMWSVGCIFAEMVNQKPLFPGDSEIDELFKIFRVLGTPNEQSWPGVSSLPDYKSAFPKWQAQDLATIVPTLDPAGLDLLSKMLRYEPNKRITARQALEHEYFKDLEMVQ.

The region spanning 4–287 is the Protein kinase domain; the sequence is YEKEEKIGEG…ARQALEHEYF (284 aa). ATP-binding positions include 10 to 18 and Lys-33; that span reads IGEGTYGVV. At Thr-14 the chain carries Phosphothreonine. Position 15 is a phosphotyrosine (Tyr-15). Asp-127 acts as the Proton acceptor in catalysis. Thr-161 carries the phosphothreonine; by CAK modification.

Belongs to the protein kinase superfamily. CMGC Ser/Thr protein kinase family. CDC2/CDKX subfamily. In terms of processing, phosphorylated at Thr-161 by CDKD-1. In terms of tissue distribution, expressed in the dividing region of the root apex and in differentiated cells such as those in the sclerenchyma, pericycle and parenchyma of the central cylinder.

The catalysed reaction is L-seryl-[protein] + ATP = O-phospho-L-seryl-[protein] + ADP + H(+). The enzyme catalyses L-threonyl-[protein] + ATP = O-phospho-L-threonyl-[protein] + ADP + H(+). It catalyses the reaction [DNA-directed RNA polymerase] + ATP = phospho-[DNA-directed RNA polymerase] + ADP + H(+). The polypeptide is Cyclin-dependent kinase A-1 (CDKA-1) (Oryza sativa subsp. japonica (Rice)).